We begin with the raw amino-acid sequence, 86 residues long: MNSKIFAVLLLLAFLSCVLSDQYCPKSSITACKKMNIRNDCCKDDDCTGGSWCCATPCGNFCKYPTDRPGGKRAAGGKSCKTGYVY.

A signal peptide spans 1–20 (MNSKIFAVLLLLAFLSCVLS). The WAP domain occupies 21 to 66 (DQYCPKSSITACKKMNIRNDCCKDDDCTGGSWCCATPCGNFCKYPT). 5 cysteine pairs are disulfide-bonded: C24–C54, C32–C58, C41–C53, C42–C80, and C47–C62.

Belongs to the venom protein 11 family. 01 (wap-1) subfamily. Post-translationally, contains 5 disulfide bonds. As to expression, expressed by the venom gland.

Its subcellular location is the secreted. Has antibacterial activity. The protein is U15-lycotoxin-Ls1d of Lycosa singoriensis (Wolf spider).